A 142-amino-acid polypeptide reads, in one-letter code: Large ribosomal subunit protein uL13 (142 aa).

Belongs to the universal ribosomal protein uL13 family. Part of the 50S ribosomal subunit.

Its function is as follows. This protein is one of the early assembly proteins of the 50S ribosomal subunit, although it is not seen to bind rRNA by itself. It is important during the early stages of 50S assembly. This chain is Large ribosomal subunit protein uL13, found in Histophilus somni (Haemophilus somnus).